Consider the following 211-residue polypeptide: Large ribosomal subunit protein uL3 (211 aa).

The segment at 130–154 (RGPMAHGSKFHRHQGSNGSATTPGR) is disordered.

It belongs to the universal ribosomal protein uL3 family. As to quaternary structure, part of the 50S ribosomal subunit. Forms a cluster with proteins L14 and L19.

In terms of biological role, one of the primary rRNA binding proteins, it binds directly near the 3'-end of the 23S rRNA, where it nucleates assembly of the 50S subunit. In Lachnospira eligens (strain ATCC 27750 / DSM 3376 / VPI C15-48 / C15-B4) (Eubacterium eligens), this protein is Large ribosomal subunit protein uL3.